We begin with the raw amino-acid sequence, 770 residues long: Coiled-coil alpha-helical rod protein 1 (770 aa).

Coiled-coil stretches lie at residues 56–289 (STVT…DLQA), 334–420 (LRNW…RQEQ), and 476–669 (GLMA…RKEE). Disordered stretches follow at residues 573–592 (LEAA…SLRQ), 641–672 (LRQI…EGQR), 700–721 (NKKC…AASC), and 744–770 (SRDE…PLLS). Residues 648–672 (ATQEKERNQELRRLQDEARKEEGQR) are compositionally biased toward basic and acidic residues. Residues 701–721 (KKCSPRSVESSSSESPAAASC) are compositionally biased toward low complexity.

It is found in the cytoplasm. Its subcellular location is the nucleus. In terms of biological role, may be a regulator of keratinocyte proliferation or differentiation. The polypeptide is Coiled-coil alpha-helical rod protein 1 (Cchcr1) (Mus musculus (Mouse)).